The primary structure comprises 346 residues: GTPase Obg (346 aa).

The region spanning 1 to 159 (MQFVDEANIR…RNLGLELSVL (159 aa)) is the Obg domain. The interval 127–149 (NVHFKSSTNRTPRQCTPGEPGDE) is disordered. Positions 130 to 140 (FKSSTNRTPRQ) are enriched in polar residues. An OBG-type G domain is found at 160 to 333 (ADVGLLGMPN…LVKEVAYGLE (174 aa)). Residues 166 to 173 (GMPNAGKS), 191 to 195 (FTTLY), 213 to 216 (DIPG), 283 to 286 (NKTD), and 314 to 316 (SAV) contribute to the GTP site. Residues serine 173 and threonine 193 each contribute to the Mg(2+) site.

This sequence belongs to the TRAFAC class OBG-HflX-like GTPase superfamily. OBG GTPase family. In terms of assembly, monomer. Requires Mg(2+) as cofactor.

It is found in the cytoplasm. In terms of biological role, an essential GTPase which binds GTP, GDP and possibly (p)ppGpp with moderate affinity, with high nucleotide exchange rates and a fairly low GTP hydrolysis rate. Plays a role in control of the cell cycle, stress response, ribosome biogenesis and in those bacteria that undergo differentiation, in morphogenesis control. This is GTPase Obg from Hydrogenovibrio crunogenus (strain DSM 25203 / XCL-2) (Thiomicrospira crunogena).